A 323-amino-acid polypeptide reads, in one-letter code: tRNA U34 carboxymethyltransferase (323 aa).

Residues Lys91, Trp105, Lys110, Gly130, Ile181–Glu182, Met196, Tyr200, and Arg315 each bind carboxy-S-adenosyl-L-methionine.

The protein belongs to the class I-like SAM-binding methyltransferase superfamily. CmoB family. Homotetramer.

The catalysed reaction is carboxy-S-adenosyl-L-methionine + 5-hydroxyuridine(34) in tRNA = 5-carboxymethoxyuridine(34) in tRNA + S-adenosyl-L-homocysteine + H(+). In terms of biological role, catalyzes carboxymethyl transfer from carboxy-S-adenosyl-L-methionine (Cx-SAM) to 5-hydroxyuridine (ho5U) to form 5-carboxymethoxyuridine (cmo5U) at position 34 in tRNAs. The polypeptide is tRNA U34 carboxymethyltransferase (Yersinia pseudotuberculosis serotype IB (strain PB1/+)).